Here is a 119-residue protein sequence, read N- to C-terminus: Ergochrome gene cluster protein CPUR_05426 (119 aa).

It participates in pigment biosynthesis. In terms of biological role, part of the ergochrome gene cluster responsible for the typical purple-black color of the ergot sclerotia. The ergochrome gene cluster produces several ergot pigments including the yellow ergochrome secalonic acid and its derivatives, as well as the red anthraquinones endocrocin and clavorubin. The pathway begins with the synthesis of atrochrysone thioester by the polyketide synthase (PKS) CPUR_05437. The atrochrysone carboxyl ACP thioesterase CPUR_05436 then breaks the thioester bond and releases the atrochrysone carboxylic acid from CPUR_05437. The atrochrysone carboxylic acid is then converted to atrochrysone which is further transformed into emodin anthrone. The next step is performed by the anthrone oxygenase CPUR_05434 that catalyzes the oxidation of emodinanthrone to emodin. Emodin is further modified to yield monodictyphenone via several steps involving CPUR_05427, CPUR_05428, CPUR_05429 and CPUR_05430. The short chain dehydrogenase/reductase CPUR_05418 then catalyzes the C-5 ketoreduction to give the xanthone skeleton of the monomeric units. Ergochromes formation requires further dimerization steps of different xanthone units, probably catalyzed by the cytochrome P450 monooxygenase CPUR_05419. CPUR_05425, CPUR_05426 and CPUR_05431 are unique to Claviceps, thus it is likely that they are involved in further modification of xanthone units or in their dimerization. The yellow ergochromes and the red anthraquinone pigments endocrocin and clavorubin are products from the same PKS derived precursors and the latter are likely shunt products in the pathway of xanthone biosynthesis. It is proposed that atrochrysone carboxylic acid released from the PKS CPUR_05437 can also be converted to endocrocin anthrone which is further oxidized into endocrocin by CPUR_05435. Endocrocin could be then modified to clavorubin, possibly by CPUR_05423 and CPUR_05431. Clavorubin is the principal anthraquinone metabolite produced by the cluster with a much higher yield compared to endocrocin. In Claviceps purpurea (strain 20.1) (Ergot fungus), this protein is Ergochrome gene cluster protein CPUR_05426.